Reading from the N-terminus, the 77-residue chain is Small ribosomal subunit protein bS20 (77 aa).

Belongs to the bacterial ribosomal protein bS20 family.

Its function is as follows. Binds directly to 16S ribosomal RNA. The chain is Small ribosomal subunit protein bS20 from Lactococcus lactis subsp. lactis (strain IL1403) (Streptococcus lactis).